Here is a 346-residue protein sequence, read N- to C-terminus: S-adenosylmethionine:tRNA ribosyltransferase-isomerase (346 aa).

Belongs to the QueA family. In terms of assembly, monomer.

It is found in the cytoplasm. It carries out the reaction 7-aminomethyl-7-carbaguanosine(34) in tRNA + S-adenosyl-L-methionine = epoxyqueuosine(34) in tRNA + adenine + L-methionine + 2 H(+). The protein operates within tRNA modification; tRNA-queuosine biosynthesis. In terms of biological role, transfers and isomerizes the ribose moiety from AdoMet to the 7-aminomethyl group of 7-deazaguanine (preQ1-tRNA) to give epoxyqueuosine (oQ-tRNA). The polypeptide is S-adenosylmethionine:tRNA ribosyltransferase-isomerase (Chloroherpeton thalassium (strain ATCC 35110 / GB-78)).